Here is an 80-residue protein sequence, read N- to C-terminus: MKYFVVFCVLIIAVAAFTSAAEDGEVFEENPLEFPKTIQKRCISARYPCSNSKDCCSGNCGTFWTCYIRKDPCSKECLAP.

The N-terminal stretch at 1-20 (MKYFVVFCVLIIAVAAFTSA) is a signal peptide. Positions 21–41 (AEDGEVFEENPLEFPKTIQKR) are excised as a propeptide. Intrachain disulfides connect Cys42/Cys56, Cys49/Cys60, Cys55/Cys77, and Cys66/Cys73.

Belongs to the neurotoxin 13 (insecticidal toxin ABC) family. 02 (Calisoga) subfamily. In terms of tissue distribution, expressed by the venom gland.

Its subcellular location is the secreted. Its function is as follows. Causes paralysis to insect larvae (H.virescens). This toxin is active only on insects. The protein is U1-nemetoxin-Csp1a of Calisoga sp. (Spider).